We begin with the raw amino-acid sequence, 273 residues long: Pyrroline-5-carboxylate reductase (273 aa).

Belongs to the pyrroline-5-carboxylate reductase family.

It localises to the cytoplasm. It carries out the reaction L-proline + NADP(+) = (S)-1-pyrroline-5-carboxylate + NADPH + 2 H(+). It catalyses the reaction L-proline + NAD(+) = (S)-1-pyrroline-5-carboxylate + NADH + 2 H(+). It functions in the pathway amino-acid biosynthesis; L-proline biosynthesis; L-proline from L-glutamate 5-semialdehyde: step 1/1. This is Pyrroline-5-carboxylate reductase (PROC) from Pisum sativum (Garden pea).